Reading from the N-terminus, the 232-residue chain is MKVLAIKLVDYREWTERLGYDREWLIQKIQNKFMMKIHEIASQYSTFPLQLRFDNFLMIVDGITNTQLIYMINDMQENLPVGIKTCLGYGKTPLEAQWNASVCLNNKEDKFKEYVDEKIAALHFDINFNTEALKYTSVYDSFLEITNIYVDLSRFLYKIGGILQYLGGDNYLGFVSTNSVNKVIEKFSDDNKIKVGIGIGQNARTAIKLATTSLEKIRNNREKTWHIEEEYH.

The protein belongs to the archaeal-type GTP cyclohydrolase family.

The catalysed reaction is GTP + 3 H2O = 2-amino-5-formylamino-6-(5-phospho-D-ribosylamino)pyrimidin-4(3H)-one + 2 phosphate + 2 H(+). Catalyzes the formation of 2-amino-5-formylamino-6-ribofuranosylamino-4(3H)-pyrimidinone ribonucleotide monophosphate and inorganic phosphate from GTP. Also has an independent pyrophosphate phosphohydrolase activity. In Saccharolobus islandicus (strain Y.N.15.51 / Yellowstone #2) (Sulfolobus islandicus), this protein is GTP cyclohydrolase III.